A 982-amino-acid polypeptide reads, in one-letter code: Filament-like plant protein 4 (982 aa).

Coiled coils occupy residues 39 to 83 (DQYT…VAKE) and 125 to 291 (EDRA…RKKL). The tract at residues 311–333 (DHRQDHRQRRSPVRPSSPLMSPM) is disordered. The span at 323-333 (VRPSSPLMSPM) shows a compositional bias: low complexity. Residues 345–401 (DNMQKFHKENDLLTERLLAMEEETKMLKEALAKRNSELQVSRNLCAKTANRLQTLEA) are a coiled coil. Over residues 423–433 (QNASNPPSMAS) the composition is skewed to polar residues. Disordered stretches follow at residues 423-466 (QNAS…AKIK) and 687-711 (QKDS…PDDC). The stretch at 452–475 (ELSQSNKDKANAKIKKTESANQLE) forms a coiled coil. Basic and acidic residues predominate over residues 457-466 (NKDKANAKIK). Over residues 693–705 (EHYQNGCSQSSDS) the composition is skewed to polar residues. Residues 722–885 (ATCKFTTEEF…AECQETILLL (164 aa)) adopt a coiled-coil conformation. Polar residues-rich tracts occupy residues 896–910 (TEQV…QQAL) and 918–943 (ATST…NTMK). Residues 896 to 982 (TEQVASSPSQ…FSRFFSTKAK (87 aa)) form a disordered region.

It belongs to the FPP family. In terms of assembly, interacts with WPP/MAF proteins.

This Arabidopsis thaliana (Mouse-ear cress) protein is Filament-like plant protein 4 (FPP4).